The chain runs to 359 residues: ATP-dependent (S)-NAD(P)H-hydrate dehydratase (359 aa).

The YjeF C-terminal domain maps to 61–350 (LLEEARKVVP…SEINSVFVNN (290 aa)). (6S)-NADPHX-binding positions include G161 and 214 to 220 (NVVEFQR). ATP contacts are provided by residues 256 to 260 (KGEVD) and 275 to 284 (GSPRRCGGQG). (6S)-NADPHX is bound at residue D285.

The protein belongs to the NnrD/CARKD family. Requires Mg(2+) as cofactor.

It catalyses the reaction (6S)-NADHX + ATP = ADP + phosphate + NADH + H(+). The enzyme catalyses (6S)-NADPHX + ATP = ADP + phosphate + NADPH + H(+). Catalyzes the dehydration of the S-form of NAD(P)HX at the expense of ATP, which is converted to ADP. Together with NAD(P)HX epimerase, which catalyzes the epimerization of the S- and R-forms, the enzyme allows the repair of both epimers of NAD(P)HX, a damaged form of NAD(P)H that is a result of enzymatic or heat-dependent hydration. The chain is ATP-dependent (S)-NAD(P)H-hydrate dehydratase from Ciona intestinalis (Transparent sea squirt).